A 151-amino-acid polypeptide reads, in one-letter code: Mini-ribonuclease 3 (151 aa).

The active site involves aspartate 28.

It belongs to the MrnC RNase family. In terms of assembly, homodimer. It depends on Mg(2+) as a cofactor.

The protein resides in the cytoplasm. In terms of biological role, involved in correct processing of both the 5' and 3' ends of 23S rRNA precursor. Processes 30S rRNA precursor transcript even in absence of ribonuclease 3 (Rnc); Rnc processes 30S rRNA into smaller rRNA precursors. The chain is Mini-ribonuclease 3 from Clostridium tetani (strain Massachusetts / E88).